Reading from the N-terminus, the 387-residue chain is MNLHEYQAKDLLESYGLKVQKGIVAHNPNEAAQAFDQLGGKFAVVKAQVHAGGRGKAGGVKVVKSSQEAREVAESLIGKNLVTFQTDAEGQPVNSVGIFEDVYPVTRELYLGAVVDRSSRKVTFMASTEGGVDIEEVAHNSPEKILKVEVDPLVGLQPFQAREVAFKLGLEGKQINDFVKTMLGAYKAFIECDFALFEINPLAVRENGEIVCVDGKINLDSNALYRHPKLLALRDKSQENAKELKASEHELNYVALEGNIGCMVNGAGLAMATMDIIQLYGGKPANFLDVGGGATKERVIEAFKLILDDENVKAVLINIFGGIVRCDMIAEAIIEAVKEVNVTVPVVVRLEGNNAEKGAKILADSGLKLIPADGLADAADKVVKSLG.

The ATP-grasp domain occupies 9–245; the sequence is KDLLESYGLK…KSQENAKELK (237 aa). ATP-binding positions include lysine 46, 53–55, glutamate 100, tyrosine 103, and glutamate 108; that span reads GRG. Mg(2+) is bound by residues asparagine 200 and aspartate 214. Substrate contacts are provided by residues asparagine 265 and 322–324; that span reads GIV.

This sequence belongs to the succinate/malate CoA ligase beta subunit family. In terms of assembly, heterotetramer of two alpha and two beta subunits. It depends on Mg(2+) as a cofactor.

It catalyses the reaction succinate + ATP + CoA = succinyl-CoA + ADP + phosphate. The catalysed reaction is GTP + succinate + CoA = succinyl-CoA + GDP + phosphate. Its pathway is carbohydrate metabolism; tricarboxylic acid cycle; succinate from succinyl-CoA (ligase route): step 1/1. Functionally, succinyl-CoA synthetase functions in the citric acid cycle (TCA), coupling the hydrolysis of succinyl-CoA to the synthesis of either ATP or GTP and thus represents the only step of substrate-level phosphorylation in the TCA. The beta subunit provides nucleotide specificity of the enzyme and binds the substrate succinate, while the binding sites for coenzyme A and phosphate are found in the alpha subunit. This chain is Succinate--CoA ligase [ADP-forming] subunit beta, found in Francisella tularensis subsp. holarctica (strain FTNF002-00 / FTA).